The primary structure comprises 229 residues: Protein fmp52-2, mitochondrial (229 aa).

Residues 1 to 45 (MTTAAVFGSTGAVGGQILATLLASDAFSSVKTVSRRLPNAQSPKL) constitute a mitochondrion transit peptide.

It belongs to the FMP52 family.

Its subcellular location is the mitochondrion outer membrane. The chain is Protein fmp52-2, mitochondrial (fmp522) from Aspergillus oryzae (strain ATCC 42149 / RIB 40) (Yellow koji mold).